A 322-amino-acid polypeptide reads, in one-letter code: Heterogeneous nuclear ribonucleoprotein D-like (322 aa).

The disordered stretch occupies residues 1–36; it reads MTGTARSALPLPQSPARALRPSGAARAAPSLSPSRF. An Omega-N-methylarginine modification is found at arginine 6. Low complexity predominate over residues 14 to 36; the sequence is SPARALRPSGAARAAPSLSPSRF. RRM domains lie at 51–133 and 136–215; these read NKMF…KGKE and KKVF…QPKE. The residue at position 64 (lysine 64) is an N6-methyllysine. Lysine 112 is covalently cross-linked (Glycyl lysine isopeptide (Lys-Gly) (interchain with G-Cter in SUMO2)). Lysine 119 carries the post-translational modification N6-acetyllysine. Serine 144 is modified (phosphoserine). 2 disordered regions span residues 216-251 and 299-322; these read VYRQ…NWNQ and SGQQ…YQPY. Residues 226 to 245 are compositionally biased toward gly residues; the sequence is GGRGAAAGGRGGARGRGRGQ. The interval 245 to 322 is necessary for interaction with TNPO1; the sequence is QGQNWNQGFN…GNHQNNYQPY (78 aa). A Dimethylated arginine; alternate modification is found at arginine 310. Omega-N-methylarginine; alternate is present on arginine 310.

Interacts with TNPO1 and ZNF148. In terms of processing, dimethylation of Arg-310 is probably of the asymmetric type.

It is found in the nucleus. It localises to the cytoplasm. Acts as a transcriptional regulator. Promotes transcription repression. Promotes transcription activation in differentiated myotubes. Binds to double- and single-stranded DNA sequences. Binds to the transcription suppressor CATR sequence of the COX5B promoter. Binds with high affinity to RNA molecules that contain AU-rich elements (AREs) found within the 3'-UTR of many proto-oncogenes and cytokine mRNAs. Binds both to nuclear and cytoplasmic poly(A) mRNAs. Binds to poly(G) and poly(A), but not to poly(U) or poly(C) RNA homopolymers. Binds to the 5'-ACUAGC-3' RNA consensus sequence. This is Heterogeneous nuclear ribonucleoprotein D-like (Hnrnpdl) from Rattus norvegicus (Rat).